The following is a 119-amino-acid chain: Ribonuclease P protein component (119 aa).

This sequence belongs to the RnpA family. As to quaternary structure, consists of a catalytic RNA component (M1 or rnpB) and a protein subunit.

The enzyme catalyses Endonucleolytic cleavage of RNA, removing 5'-extranucleotides from tRNA precursor.. Functionally, RNaseP catalyzes the removal of the 5'-leader sequence from pre-tRNA to produce the mature 5'-terminus. It can also cleave other RNA substrates such as 4.5S RNA. The protein component plays an auxiliary but essential role in vivo by binding to the 5'-leader sequence and broadening the substrate specificity of the ribozyme. The chain is Ribonuclease P protein component from Salmonella paratyphi A (strain AKU_12601).